A 221-amino-acid polypeptide reads, in one-letter code: Glutathione S-transferase Z1 (221 aa).

A GST N-terminal domain is found at 7-88; it reads EKLKLYSYWR…YLDEKYPEPP (82 aa). Glutathione-binding positions include 17–18, 17–22, Q46, 46–47, 59–60, V60, 72–73, Q112, and 116–118; these read SS, SSCAHR, QF, TV, DS, and NLA. Residues 93–218 form the GST C-terminal domain; the sequence is DLHKRAVNYQ…LPEKQPDAPS (126 aa).

Belongs to the GST superfamily. Zeta family. Homodimer.

The protein localises to the cytoplasm. Its subcellular location is the cytosol. The enzyme catalyses RX + glutathione = an S-substituted glutathione + a halide anion + H(+). Functionally, acts a maleylacetone isomerase. Also catalyzes the glutathione-dependent dehalogenation of dichloroacetic acid to glyoxylic acid. In vitro, possesses glutathione peroxidase activity toward cumene hydroperoxide and linoleic acid-13-hydroperoxide. The polypeptide is Glutathione S-transferase Z1 (GSTZ1) (Arabidopsis thaliana (Mouse-ear cress)).